A 64-amino-acid polypeptide reads, in one-letter code: Purotoxin-2 (64 aa).

Residues 1-44 (AKACTPLLHDCSHDRHSCCRGDMFKYVCDCFYPEGEDKTEVCSC) are knottin domain. Cystine bridges form between Cys4–Cys19, Cys11–Cys28, Cys18–Cys44, and Cys30–Cys42. The linear cationic cytotoxin domain stretch occupies residues 45–64 (QQPKSHKIAEKIIDKAKTTL). At Leu64 the chain carries Leucine amide.

Belongs to the neurotoxin 19 (CSTX) family. 05 (U4-Lctx) subfamily. Post-translationally, amidation at Leu-64 is not mandatory for activity on P2RX3. As to expression, expressed by the venom gland.

It localises to the secreted. Enhances the high-affinity desensitization of human P2RX3 purinoceptors. At 50 nM, the toxin decreases the IC(50) for ambient ATP from 2.67 nM to 0.77 nM in human P2RX3. The polypeptide is Purotoxin-2 (Alopecosa marikovskyi (Wolf spider)).